The following is an 898-amino-acid chain: Vacuolar membrane protease (898 aa).

Topologically, residues 1 to 14 (MGIVDYLVAAVSFR) are cytoplasmic. The chain crosses the membrane as a helical span at residues 15–35 (TLPTTFVAVLVYLAIFISVLI). Over 36 to 342 (TDELPATPKD…LFGQALIVFP (307 aa)) the chain is Vacuolar. Residues N50, N103, and N110 are each glycosylated (N-linked (GlcNAc...) asparagine). The Zn(2+) site is built by H139 and D151. E183 serves as the catalytic Proton acceptor. E184 lines the Zn(2+) pocket. N200 is a glycosylation site (N-linked (GlcNAc...) asparagine). 2 residues coordinate Zn(2+): E209 and H284. The chain crosses the membrane as a helical span at residues 343-365 (LSAMITFNIVFLVVGPIMLALLV). Topologically, residues 366–411 (TFDIVARHRRQEMIGGGYEEQGFFARAWTSFKSFRWVGGFWKHAKF) are cytoplasmic. Residues 412-432 (WVALAVTVGLQVLLCVGYLYI) form a helical membrane-spanning segment. N433 is a topological domain (vacuolar). Residues 434 to 454 (PLIAYSSSHIVLLSFLSLAYL) traverse the membrane as a helical segment. At 455–479 (STYLVHNIPSPTDTYGSHLPEQQKQ) the chain is on the cytoplasmic side. Residues 480-500 (AALFQLYFFTWILLLAATVVG) form a helical membrane-spanning segment. The Vacuolar portion of the chain corresponds to 501-509 (AKLSVGSFY). The helical transmembrane segment at 510-530 (ILSLWNAVLFAACAIGSIAGL) threads the bilayer. Residues 531–593 (LSSHTVEGDA…PGGKEGEEVS (63 aa)) lie on the Cytoplasmic side of the membrane. A helical membrane pass occupies residues 594-614 (GAIGWWFVQFVLSVPAVVILV). Residues 615–635 (SQLALLMLAATEQTLADGSPA) lie on the Vacuolar side of the membrane. A helical transmembrane segment spans residues 636-656 (VTVYGGASLMSVLAILPLAPF). The Cytoplasmic portion of the chain corresponds to 657 to 664 (ACKLHRRV). A helical membrane pass occupies residues 665-685 (AYVALVVLIASTAYAWLVFPF). The Vacuolar portion of the chain corresponds to 686–898 (SERAPLKVFF…LVEGYKAFAV (213 aa)). 3 N-linked (GlcNAc...) asparagine glycosylation sites follow: N704, N733, and N764.

This sequence belongs to the peptidase M28 family. Requires Zn(2+) as cofactor.

The protein resides in the vacuole membrane. May be involved in vacuolar sorting and osmoregulation. The polypeptide is Vacuolar membrane protease (Schizophyllum commune (strain H4-8 / FGSC 9210) (Split gill fungus)).